Here is a 372-residue protein sequence, read N- to C-terminus: 4-hydroxy-3-methylbut-2-en-1-yl diphosphate synthase (flavodoxin) (372 aa).

[4Fe-4S] cluster contacts are provided by C270, C273, C305, and E312.

The protein belongs to the IspG family. [4Fe-4S] cluster is required as a cofactor.

It carries out the reaction (2E)-4-hydroxy-3-methylbut-2-enyl diphosphate + oxidized [flavodoxin] + H2O + 2 H(+) = 2-C-methyl-D-erythritol 2,4-cyclic diphosphate + reduced [flavodoxin]. It participates in isoprenoid biosynthesis; isopentenyl diphosphate biosynthesis via DXP pathway; isopentenyl diphosphate from 1-deoxy-D-xylulose 5-phosphate: step 5/6. Its function is as follows. Converts 2C-methyl-D-erythritol 2,4-cyclodiphosphate (ME-2,4cPP) into 1-hydroxy-2-methyl-2-(E)-butenyl 4-diphosphate. The polypeptide is 4-hydroxy-3-methylbut-2-en-1-yl diphosphate synthase (flavodoxin) (Salmonella paratyphi B (strain ATCC BAA-1250 / SPB7)).